Reading from the N-terminus, the 361-residue chain is Phosphate acyltransferase (361 aa).

The disordered stretch occupies residues 340 to 361 (VPADGAATEQGPTPRRIAPPRT).

This sequence belongs to the PlsX family. Homodimer. Probably interacts with PlsY.

The protein localises to the cytoplasm. The enzyme catalyses a fatty acyl-[ACP] + phosphate = an acyl phosphate + holo-[ACP]. It functions in the pathway lipid metabolism; phospholipid metabolism. In terms of biological role, catalyzes the reversible formation of acyl-phosphate (acyl-PO(4)) from acyl-[acyl-carrier-protein] (acyl-ACP). This enzyme utilizes acyl-ACP as fatty acyl donor, but not acyl-CoA. The polypeptide is Phosphate acyltransferase (Anaeromyxobacter dehalogenans (strain 2CP-1 / ATCC BAA-258)).